The chain runs to 357 residues: tRNA N6-adenosine threonylcarbamoyltransferase (357 aa).

H113 and H117 together coordinate Fe cation. Substrate is bound by residues 136–140, D169, G182, and N288; that span reads LVSGG. D316 serves as a coordination point for Fe cation.

Belongs to the KAE1 / TsaD family. It depends on Fe(2+) as a cofactor.

It is found in the cytoplasm. The enzyme catalyses L-threonylcarbamoyladenylate + adenosine(37) in tRNA = N(6)-L-threonylcarbamoyladenosine(37) in tRNA + AMP + H(+). Required for the formation of a threonylcarbamoyl group on adenosine at position 37 (t(6)A37) in tRNAs that read codons beginning with adenine. Is involved in the transfer of the threonylcarbamoyl moiety of threonylcarbamoyl-AMP (TC-AMP) to the N6 group of A37, together with TsaE and TsaB. TsaD likely plays a direct catalytic role in this reaction. The polypeptide is tRNA N6-adenosine threonylcarbamoyltransferase (Gemmatimonas aurantiaca (strain DSM 14586 / JCM 11422 / NBRC 100505 / T-27)).